We begin with the raw amino-acid sequence, 131 residues long: Small ribosomal subunit protein uS11 (131 aa).

The protein belongs to the universal ribosomal protein uS11 family. As to quaternary structure, part of the 30S ribosomal subunit. Interacts with proteins S7 and S18. Binds to IF-3.

Located on the platform of the 30S subunit, it bridges several disparate RNA helices of the 16S rRNA. Forms part of the Shine-Dalgarno cleft in the 70S ribosome. The chain is Small ribosomal subunit protein uS11 from Exiguobacterium sp. (strain ATCC BAA-1283 / AT1b).